A 638-amino-acid chain; its full sequence is 1-deoxy-D-xylulose-5-phosphate synthase (638 aa).

Thiamine diphosphate-binding positions include His81 and 122 to 124 (GHS). Asp153 serves as a coordination point for Mg(2+). Residues 154 to 155 (GS), Asn182, Tyr293, and Glu377 contribute to the thiamine diphosphate site. Asn182 contacts Mg(2+).

This sequence belongs to the transketolase family. DXPS subfamily. In terms of assembly, homodimer. Mg(2+) is required as a cofactor. The cofactor is thiamine diphosphate.

It catalyses the reaction D-glyceraldehyde 3-phosphate + pyruvate + H(+) = 1-deoxy-D-xylulose 5-phosphate + CO2. The protein operates within metabolic intermediate biosynthesis; 1-deoxy-D-xylulose 5-phosphate biosynthesis; 1-deoxy-D-xylulose 5-phosphate from D-glyceraldehyde 3-phosphate and pyruvate: step 1/1. In terms of biological role, catalyzes the acyloin condensation reaction between C atoms 2 and 3 of pyruvate and glyceraldehyde 3-phosphate to yield 1-deoxy-D-xylulose-5-phosphate (DXP). This Oleidesulfovibrio alaskensis (strain ATCC BAA-1058 / DSM 17464 / G20) (Desulfovibrio alaskensis) protein is 1-deoxy-D-xylulose-5-phosphate synthase.